The sequence spans 287 residues: MTMMDMNFKYCHKIMKKHSKSFSYAFDLLPEDQRKAVWAIYAVCRKIDDSIDVYGDIQFLNQIKEDIQSIEKYPYEHHHFQSDRRIMMALQHVAQHKNIAFQSFYNLIDTVYKDQHFTMFETDAELFGYCYGVAGTVGEVLTPILSDHETHQTYDVARRLGESLQLINILRDVGEDFDNERIYFSKQRLKQYEVDIAEVYQNGVNNHYIDLWEYYAAIAEKDFQDVMDQIKVFSIEAQPIIELAARIYIEILDEVRQANYTLHERVFVDKRKKAKLFHEINSKYHRI.

(2E,6E)-farnesyl diphosphate is bound by residues 18–21 (HSKS), tyrosine 41, and arginine 45. Mg(2+) contacts are provided by aspartate 48 and aspartate 52. Glutamine 165 serves as a coordination point for (2E,6E)-farnesyl diphosphate. Asparagine 168 is a Mg(2+) binding site. Arginine 171 contributes to the (2E,6E)-farnesyl diphosphate binding site. Residue aspartate 172 participates in Mg(2+) binding. A (2E,6E)-farnesyl diphosphate-binding site is contributed by tyrosine 248.

This sequence belongs to the phytoene/squalene synthase family. CrtM subfamily. Mg(2+) serves as cofactor.

The enzyme catalyses 2 (2E,6E)-farnesyl diphosphate = 15-cis-4,4'-diapophytoene + 2 diphosphate. It functions in the pathway carotenoid biosynthesis; staphyloxanthin biosynthesis; staphyloxanthin from farnesyl diphosphate: step 1/5. Involved in the biosynthesis of the yellow-orange carotenoid staphyloxanthin, which plays a role in the virulence via its protective function against oxidative stress. Catalyzes the head-to-head condensation of two molecules of farnesyl diphosphate (FPP) into the colorless C(30) carotenoid 4,4'-diapophytoene (dehydrosqualene). The protein is 4,4'-diapophytoene synthase of Staphylococcus aureus (strain NCTC 8325 / PS 47).